Consider the following 244-residue polypeptide: Uracil phosphoribosyltransferase (244 aa).

Residues K59, R68, and Y102–I105 contribute to the GTP site. 5-phospho-alpha-D-ribose 1-diphosphate is bound at residue R112. Position 129 (R129) interacts with GTP. R137 provides a ligand contact to 5-phospho-alpha-D-ribose 1-diphosphate. R158 contributes to the GTP binding site. 5-phospho-alpha-D-ribose 1-diphosphate is bound by residues D164 and D164–S172. Residues I229 and G234–F236 each bind uracil. D235 serves as a coordination point for 5-phospho-alpha-D-ribose 1-diphosphate.

It belongs to the UPRTase family. Monomer. Forms homodimers in presence of substrates and homotetramers in the presence of GTP. Mg(2+) serves as cofactor.

The enzyme catalyses UMP + diphosphate = 5-phospho-alpha-D-ribose 1-diphosphate + uracil. It participates in pyrimidine metabolism; UMP biosynthesis via salvage pathway; UMP from uracil: step 1/1. Allosterically activated by GTP. Binding of GTP leads to 5-time activation of the enzyme. Catalyzes the conversion of uracil and 5-phospho-alpha-D-ribose 1-diphosphate (PRPP) to UMP and diphosphate. The chain is Uracil phosphoribosyltransferase (uprt) from Toxoplasma gondii.